We begin with the raw amino-acid sequence, 742 residues long: Synaptic vesicle glycoprotein 2A (742 aa).

The interval 1 to 57 (MEEGFRDRAAFIRGAKDIAKEVKKHATKKVVKGLDRVQDEYSRRSYSRFEEEDDDDD) is interaction with SYT1. Residues 1-169 (MEEGFRDRAA…GHGRFQWTLY (169 aa)) lie on the Cytoplasmic side of the membrane. The span at 32 to 49 (KGLDRVQDEYSRRSYSRF) shows a compositional bias: basic and acidic residues. The tract at residues 32–144 (KGLDRVQDEY…GRGEAQRRKE (113 aa)) is disordered. Phosphoserine is present on residues Ser-80 and Ser-81. Phosphothreonine is present on Thr-84. The span at 122–137 (VRGGLGDGEGPPGGRG) shows a compositional bias: gly residues. The chain crosses the membrane as a helical span at residues 170-190 (FVLGLALMADGVEVFVVGFVL). At 191–205 (PSAEKDMCLSDSNKG) the chain is on the extracellular side. Residues 206–226 (MLGLIVYLGMMVGAFLWGGLA) form a helical membrane-spanning segment. Residues 227–233 (DRLGRRQ) are Cytoplasmic-facing. Residues 234 to 254 (CLLISLSVNSVFAFFSSFVQG) form a helical membrane-spanning segment. At 255 to 262 (YGTFLFCR) the chain is on the extracellular side. A helical transmembrane segment spans residues 263 to 283 (LLSGVGIGGSIPIVFSYFSEF). The Cytoplasmic segment spans residues 284 to 294 (LAQEKRGEHLS). A helical membrane pass occupies residues 295–315 (WLCMFWMIGGVYAAAMAWAII). Over 316–334 (PHYGWSFQMGSAYQFHSWR) the chain is Extracellular. A helical membrane pass occupies residues 335–355 (VFVLVCAFPSVFAIGALTTQP). The Cytoplasmic portion of the chain corresponds to 356–447 (ESPRFFLENG…CFGPEYRRIT (92 aa)). Ser-393 carries the phosphoserine modification. The helical transmembrane segment at 448-468 (LMMMGVWFTMSFSYYGLTVWF) threads the bilayer. At 469–598 (PDMIRHLQAV…GTGEGAYMVY (130 aa)) the chain is on the extracellular side. Tyr-480 is modified (phosphotyrosine). Asn-498, Asn-548, and Asn-573 each carry an N-linked (GlcNAc...) asparagine glycan. A helical membrane pass occupies residues 599–619 (FVSFLGTLAVLPGNIVSALLM). Topologically, residues 620–626 (DKIGRLR) are cytoplasmic. A helical membrane pass occupies residues 627–647 (MLAGSSVMSCVSCFFLSFGNS). Residues 648-651 (ESAM) lie on the Extracellular side of the membrane. A helical membrane pass occupies residues 652–672 (IALLCLFGGVSIASWNALDVL). Over 673–685 (TVELYPSDKRTTA) the chain is Cytoplasmic. Residues 686–708 (FGFLNALCKLAAVLGISIFTSFV) form a helical membrane-spanning segment. The Extracellular portion of the chain corresponds to 709-712 (GITK). Residues 713–731 (AAPILFASAALALGSSLAL) form a helical membrane-spanning segment. At 732 to 742 (KLPETRGQVLQ) the chain is on the cytoplasmic side.

The protein belongs to the major facilitator superfamily. Interacts with SYT1/synaptotagmin-1 in a calcium-dependent manner. Binds the adapter protein complex AP-2. In terms of processing, phosphorylation by CK1 of the N-terminal cytoplasmic domain regulates interaction with SYT1. N-glycosylated.

It is found in the presynapse. The protein localises to the cytoplasmic vesicle. It localises to the secretory vesicle. Its subcellular location is the synaptic vesicle membrane. Plays a role in the control of regulated secretion in neural and endocrine cells, enhancing selectively low-frequency neurotransmission. Positively regulates vesicle fusion by maintaining the readily releasable pool of secretory vesicles. This Bos taurus (Bovine) protein is Synaptic vesicle glycoprotein 2A (SV2A).